The chain runs to 434 residues: Glutamate-1-semialdehyde 2,1-aminomutase (434 aa).

The residue at position 266 (lysine 266) is an N6-(pyridoxal phosphate)lysine.

The protein belongs to the class-III pyridoxal-phosphate-dependent aminotransferase family. HemL subfamily. Homodimer. Pyridoxal 5'-phosphate is required as a cofactor.

It is found in the cytoplasm. The enzyme catalyses (S)-4-amino-5-oxopentanoate = 5-aminolevulinate. It functions in the pathway porphyrin-containing compound metabolism; protoporphyrin-IX biosynthesis; 5-aminolevulinate from L-glutamyl-tRNA(Glu): step 2/2. The chain is Glutamate-1-semialdehyde 2,1-aminomutase from Fusobacterium nucleatum subsp. nucleatum (strain ATCC 25586 / DSM 15643 / BCRC 10681 / CIP 101130 / JCM 8532 / KCTC 2640 / LMG 13131 / VPI 4355).